Reading from the N-terminus, the 219-residue chain is Probable GTP-binding protein EngB (219 aa).

An EngB-type G domain is found at 31 to 205 (VGVEIAFAGR…LSILNEWCHP (175 aa)). GTP is bound by residues 39 to 46 (GRSNAGKS), 66 to 70 (GRTQL), 84 to 87 (DLPG), 151 to 154 (TKSD), and 184 to 186 (FSA). Serine 46 and threonine 68 together coordinate Mg(2+).

It belongs to the TRAFAC class TrmE-Era-EngA-EngB-Septin-like GTPase superfamily. EngB GTPase family. It depends on Mg(2+) as a cofactor.

In terms of biological role, necessary for normal cell division and for the maintenance of normal septation. The polypeptide is Probable GTP-binding protein EngB (Shewanella sp. (strain W3-18-1)).